The following is an 851-amino-acid chain: Probable disease resistance protein At1g15890 (851 aa).

One can recognise an NB-ARC domain in the interval 139–441 (AEKIPAPKVE…CEGFIDGNED (303 aa)). 181-188 (GMGGVGKT) lines the ATP pocket. LRR repeat units lie at residues 514–535 (SLRRMSLMCNQIANISSSSNSP), 536–557 (NLSTLLLQNNKLVHISCDFFRF), 560–582 (ALVVLDLSRNSSLSSLPEAISKL), 584–605 (SLQYINLSTTGIKWLPVSFKEL), and 607–629 (KLIHLNLEFTDELESIVGIATSL).

It belongs to the disease resistance NB-LRR family.

Its function is as follows. Probable disease resistance protein. The protein is Probable disease resistance protein At1g15890 of Arabidopsis thaliana (Mouse-ear cress).